The chain runs to 82 residues: Delta-conotoxin SVIE (82 aa).

Residues 1-22 (MKLTCVMIVAVLFLTTWTFVTA) form the signal peptide. Positions 23 to 51 (DDSRYGLKNLFPKARHEMKNPEASKLNKR) are excised as a propeptide. Intrachain disulfides connect Cys-54/Cys-69, Cys-61/Cys-73, and Cys-68/Cys-77. The residue at position 65 (Pro-65) is a 4-hydroxyproline.

This sequence belongs to the conotoxin O1 superfamily. In terms of tissue distribution, expressed by the venom duct.

Its subcellular location is the secreted. Functionally, delta-conotoxins bind to site 6 of voltage-gated sodium channels (Nav) and inhibit the inactivation process. Impairs rapid channel inactivation of Nav1.4/SCN4A (Kd=500 nM). Interacts with a conserved hydrophobic triad (YFV) in the domain-4 voltage sensor of sodium channels. In vivo, injection of both native or synthetic peptide induces twitching of back limbs, running in circles, and spastic paralysis. In Conus striatus (Striated cone), this protein is Delta-conotoxin SVIE (SO6).